Reading from the N-terminus, the 139-residue chain is Spermatogenesis-associated protein 33 (139 aa).

The tract at residues 1–67 is interaction with ATG16L1; it reads MVTHAAGART…TAKHPPPAAS (67 aa). The tract at residues 1 to 83 is disordered; the sequence is MVTHAAGART…VKQKSSRKKV (83 aa). Basic and acidic residues predominate over residues 25–50; that stretch reads KSKEKLMEKHSQEARQADRESEKPVD. Positions 68-139 are interaction with VDAC2; that stretch reads LEEKPDVKQK…ADAYNSHLKE (72 aa). A PQIIIT motif is present at residues 86–91; sequence PQIIIT. At serine 94 the chain carries Phosphoserine. The segment covering 97–109 has biased composition (polar residues); sequence TLVSCSSSGSDQQ. The segment at 97-139 is disordered; that stretch reads TLVSCSSSGSDQQRTIREPEDWGPYRRHRNPSTADAYNSHLKE. Over residues 110–120 the composition is skewed to basic and acidic residues; that stretch reads RTIREPEDWGP.

As to quaternary structure, interacts (via PQIIIT motif) with PPP3R1, PPP3R2, PPP3CA, PPP3CB and PPP3CC. Interacts with VDAC2. Interacts with ATG16L1 (via WD repeats).

The protein resides in the cytoplasm. It localises to the cytosol. It is found in the nucleus. The protein localises to the mitochondrion. Its function is as follows. Plays an important role in sperm motility and male fertility. Required for sperm midpiece flexibility and for the localization of sperm calcineurin to the mitochondria. Promotes mitophagy as well as acts as an autophagy mediator in male germline cells. Links damaged mitochondria to autophagosomes via its binding to the outer mitochondrial membrane protein VDAC2, as well as to key autophagy machinery component ATG16L1. The protein is Spermatogenesis-associated protein 33 (SPATA33) of Homo sapiens (Human).